The primary structure comprises 1154 residues: Serine-aspartate repeat-containing protein E (1154 aa).

The N-terminal stretch at 1–52 (MINRDNKKAITKKGMISNRLNKFSIRKYTVGTASILVGTTLIFGLGNQEAKA) is a signal peptide. Positions 23–34 (FSIRKYTVGTAS) match the YSIRK-G/S signaling motif motif. The tract at residues 53 to 606 (AENTSTENAK…GDGTVKPEEK (554 aa)) is ligand binding A region. Residues 54–230 (ENTSTENAKQ…SKEELKNNPE (177 aa)) form a disordered region. Positions 61-75 (AKQDDATTSDNKEVV) are enriched in basic and acidic residues. Residues 77 to 90 (ETENNSTTENNSTN) show a composition bias toward low complexity. Positions 92–108 (IKKETNTDSQPEAKKES) are enriched in basic and acidic residues. A compositionally biased stretch (polar residues) spans 118–129 (NNVTATTETKPQ). Residues 130–145 (NIEKENVKPSTDKTAT) are compositionally biased toward basic and acidic residues. A compositionally biased stretch (low complexity) spans 166–178 (TTKPSTSEPSTSE). Positions 179 to 212 (IQTKPTTPQESTNIENSQPQPTPSKVDNQVTDAT) are enriched in polar residues. Basic and acidic residues predominate over residues 221–230 (SKEELKNNPE). CNA-B domains follow at residues 607 to 719 (LYKI…YKEP), 720 to 829 (KYNL…YKTP), and 830 to 940 (KYSL…EEDT). Residues 904 to 1129 (VTNTTEDDKD…TGSENNGSNN (226 aa)) are disordered. Composition is skewed to acidic residues over residues 908-918 (TEDDKDADGGE) and 935-1093 (YFEE…DSDS). Positions 1117 to 1121 (LPETG) match the LPXTG sorting signal motif. A Pentaglycyl murein peptidoglycan amidated threonine modification is found at Thr-1120. Residues 1121–1154 (GSENNGSNNATLFGGLFAALGSLLLFGRRKKQNK) constitute a propeptide, removed by sortase.

This sequence belongs to the serine-aspartate repeat-containing protein (SDr) family. As to quaternary structure, interacts with host complement factor H/CFAH (via C-terminus). Interacts with host complement regulator C4BPA.

Its subcellular location is the secreted. The protein resides in the cell wall. Its function is as follows. Cell surface-associated calcium-binding protein which plays an important role in adhesion and pathogenesis. Contributes to the resistance to killing by innate immune components in blood and thus attenuates bacterial clearance by interacting with host complement factor H/CFAH and modulating its activity. Also inhibits bacterial opsonization and killing by interacting with host complement regulator C4BPA and thus inhibiting classical complement pathway activation. This Staphylococcus aureus (strain USA300) protein is Serine-aspartate repeat-containing protein E (sdrE).